We begin with the raw amino-acid sequence, 96 residues long: U-stichotoxin-Hau2b (96 aa).

The N-terminal stretch at 1–18 is a signal peptide; the sequence is MKPIFIVALLFSTCLVNA. 2 consecutive propeptides follow at residues 19–29 and 30–33; these read KPSIDDAEMKR and EPKP. 2 disulfides stabilise this stretch: Cys40–Cys51 and Cys43–Cys58. 2 consecutive propeptides follow at residues 62-64 and 65-68; these read RKR and EPKP. Cystine bridges form between Cys75/Cys86 and Cys78/Cys93.

Belongs to the sea anemone BBH family.

The protein resides in the secreted. Its subcellular location is the nematocyst. Functionally, neurotoxin that paralyzes freshwater crabs at high concentration. The protein is U-stichotoxin-Hau2b of Heteractis aurora (Banded sea anemone).